Consider the following 193-residue polypeptide: MPNWGGGKKCGVCQKTVYFAEEVQCEGNSFHKSCFLCMVCKKNLDSTTVAVHGEEIYCKSCYGKKYGPKGYGYGQGAGTLSMDKGESLGIKHEEAPGHRPTTNPNASKFAQKIGGSERCPRCSQAVYAAEKVIGAGKSWHKSCFRCAKCGKGLESTTLADKDGEIYCKGCYAKNFGPKGFGFGQGAGALVHSE.

The 52-residue stretch at 10-61 (CGVCQKTVYFAEEVQCEGNSFHKSCFLCMVCKKNLDSTTVAVHGEEIYCKSC) folds into the LIM zinc-binding 1 domain. The Nuclear localization signal signature appears at 64–69 (KKYGPK). At Ser81 the chain carries Phosphoserine. Lys84 bears the N6-acetyllysine mark. Residue Lys91 forms a Glycyl lysine isopeptide (Lys-Gly) (interchain with G-Cter in SUMO2) linkage. An N6-acetyllysine mark is found at Lys112, Lys131, Lys137, and Lys161. Residues 119–170 (CPRCSQAVYAAEKVIGAGKSWHKSCFRCAKCGKGLESTTLADKDGEIYCKGC) form the LIM zinc-binding 2 domain. Phosphoserine is present on Ser192.

As to quaternary structure, interacts with ASCC1; ASCC2 and TRIP4.

It localises to the nucleus. Functionally, could play a role in neuronal development. This is Cysteine and glycine-rich protein 1 (Csrp1) from Rattus norvegicus (Rat).